Reading from the N-terminus, the 94-residue chain is Acylphosphatase (94 aa).

The 87-residue stretch at 8-94 (RLTAWVHGRV…REQITGFHER (87 aa)) folds into the Acylphosphatase-like domain. Catalysis depends on residues Arg-23 and Asn-41.

It belongs to the acylphosphatase family.

It carries out the reaction an acyl phosphate + H2O = a carboxylate + phosphate + H(+). This chain is Acylphosphatase (acyP), found in Mycobacterium sp. (strain KMS).